Here is a 104-residue protein sequence, read N- to C-terminus: Large ribosomal subunit protein bL21 (104 aa).

Residues 81 to 90 (QGYRRHHGHR) show a composition bias toward basic residues. Residues 81-104 (QGYRRHHGHRQPYTQVKITGISAG) form a disordered region.

Belongs to the bacterial ribosomal protein bL21 family. Part of the 50S ribosomal subunit. Contacts protein L20.

This protein binds to 23S rRNA in the presence of protein L20. The polypeptide is Large ribosomal subunit protein bL21 (Halorhodospira halophila (strain DSM 244 / SL1) (Ectothiorhodospira halophila (strain DSM 244 / SL1))).